Reading from the N-terminus, the 123-residue chain is Small ribosomal subunit protein uS13 (123 aa).

The segment at 93–123 is disordered; the sequence is RRNLPVRGQKTKTNARTRKGPKRAIGGKKKK.

The protein belongs to the universal ribosomal protein uS13 family. In terms of assembly, part of the 30S ribosomal subunit. Forms a loose heterodimer with protein S19. Forms two bridges to the 50S subunit in the 70S ribosome.

Its function is as follows. Located at the top of the head of the 30S subunit, it contacts several helices of the 16S rRNA. In the 70S ribosome it contacts the 23S rRNA (bridge B1a) and protein L5 of the 50S subunit (bridge B1b), connecting the 2 subunits; these bridges are implicated in subunit movement. Contacts the tRNAs in the A and P-sites. This Clostridium botulinum (strain Loch Maree / Type A3) protein is Small ribosomal subunit protein uS13.